We begin with the raw amino-acid sequence, 761 residues long: Protein ACTIVITY OF BC1 COMPLEX KINASE 8, chloroplastic (761 aa).

The transit peptide at 1–57 (MATSSSSSSSLLLPNINFNSRQSPTITRSVSIAGIFLPRNRLSYNHNLRIRTRLIRA) directs the protein to the chloroplast. The Protein kinase domain occupies 288-648 (RFDYEPIAAA…VKDLRKRWDR (361 aa)). Residues 294-302 (IAAASLGQV) and Lys315 contribute to the ATP site. Residue Asp452 is the Proton acceptor of the active site. A helical membrane pass occupies residues 725–745 (PATIAYTVCAFFSLQVLIGII).

It belongs to the protein kinase superfamily. ADCK protein kinase family. In terms of tissue distribution, mostly expressed in leaves and flowers, and, to a lower extent, in stems, siliques and roots.

The protein resides in the plastid. Its subcellular location is the chloroplast envelope. It localises to the chloroplast membrane. The enzyme catalyses L-seryl-[protein] + ATP = O-phospho-L-seryl-[protein] + ADP + H(+). It catalyses the reaction L-threonyl-[protein] + ATP = O-phospho-L-threonyl-[protein] + ADP + H(+). Functionally, involved in resistance to oxidative stress (e.g. hydrogen peroxide H(2)O(2)), high light and heavy metals (e.g. cadmium ions Cd(2+)). Influences responses to reactive oxygen species (ROS) production. Together with SIA1, regulates iron distribution within the chloroplast and mediates the oxidative stress response. Together with ABC1K7, influences chloroplast lipid synthesis/accumulation and modulates chloroplast membrane composition in response to stress. The protein is Protein ACTIVITY OF BC1 COMPLEX KINASE 8, chloroplastic of Arabidopsis thaliana (Mouse-ear cress).